The chain runs to 294 residues: Nucleotide-binding protein CLJ_B3680 (294 aa).

8–15 is a binding site for ATP; sequence GLSGAGKT. 59-62 serves as a coordination point for GTP; the sequence is DIRG.

The protein belongs to the RapZ-like family.

Displays ATPase and GTPase activities. The sequence is that of Nucleotide-binding protein CLJ_B3680 from Clostridium botulinum (strain 657 / Type Ba4).